A 407-amino-acid chain; its full sequence is Phosphopentomutase (407 aa).

Mn(2+) contacts are provided by Asp10, Asp306, His311, Asp347, His348, and His359.

This sequence belongs to the phosphopentomutase family. Mn(2+) serves as cofactor.

It localises to the cytoplasm. The enzyme catalyses 2-deoxy-alpha-D-ribose 1-phosphate = 2-deoxy-D-ribose 5-phosphate. It carries out the reaction alpha-D-ribose 1-phosphate = D-ribose 5-phosphate. The protein operates within carbohydrate degradation; 2-deoxy-D-ribose 1-phosphate degradation; D-glyceraldehyde 3-phosphate and acetaldehyde from 2-deoxy-alpha-D-ribose 1-phosphate: step 1/2. In terms of biological role, isomerase that catalyzes the conversion of deoxy-ribose 1-phosphate (dRib-1-P) and ribose 1-phosphate (Rib-1-P) to deoxy-ribose 5-phosphate (dRib-5-P) and ribose 5-phosphate (Rib-5-P), respectively. The polypeptide is Phosphopentomutase (Cronobacter sakazakii (strain ATCC BAA-894) (Enterobacter sakazakii)).